A 142-amino-acid polypeptide reads, in one-letter code: NADH-quinone oxidoreductase subunit A (142 aa).

Helical transmembrane passes span 8–28, 63–83, and 93–113; these read FGTV…GYLT, FYVV…LFPW, and FALI…VYAW.

Belongs to the complex I subunit 3 family. As to quaternary structure, NDH-1 is composed of 14 different subunits. Subunits NuoA, H, J, K, L, M, N constitute the membrane sector of the complex.

Its subcellular location is the cell inner membrane. The enzyme catalyses a quinone + NADH + 5 H(+)(in) = a quinol + NAD(+) + 4 H(+)(out). NDH-1 shuttles electrons from NADH, via FMN and iron-sulfur (Fe-S) centers, to quinones in the respiratory chain. The immediate electron acceptor for the enzyme in this species is believed to be a menaquinone. Couples the redox reaction to proton translocation (for every two electrons transferred, four hydrogen ions are translocated across the cytoplasmic membrane), and thus conserves the redox energy in a proton gradient. This is NADH-quinone oxidoreductase subunit A from Chlorobium phaeobacteroides (strain BS1).